The following is an 883-amino-acid chain: Integrator complex subunit 6-B (883 aa).

In terms of domain architecture, VWFA spans 3–227; the sequence is ILLFLLDTSA…QCLESLVQKI (225 aa). An Inhibitory loop motif is present at residues 626–633; that stretch reads MMIDEADE.

This sequence belongs to the Integrator subunit 6 family. Component of the Integrator complex, composed of core subunits INTS1, INTS2, INTS3, INTS4, INTS5, INTS6, INTS7, INTS8, INTS9/RC74, INTS10, INTS11/CPSF3L, INTS12, INTS13, INTS14 and INTS15. The core complex associates with protein phosphatase 2A subunits PPP2CA and PPP2R1A, to form the Integrator-PP2A (INTAC) complex.

The protein resides in the nucleus. The protein localises to the chromosome. Its function is as follows. Component of the integrator complex, a multiprotein complex that terminates RNA polymerase II (Pol II) transcription in the promoter-proximal region of genes. The integrator complex provides a quality checkpoint during transcription elongation by driving premature transcription termination of transcripts that are unfavorably configured for transcriptional elongation: the complex terminates transcription by (1) catalyzing dephosphorylation of the C-terminal domain (CTD) of Pol II subunit POLR2A/RPB1 and SUPT5H/SPT5, (2) degrading the exiting nascent RNA transcript via endonuclease activity and (3) promoting the release of Pol II from bound DNA. The integrator complex is also involved in terminating the synthesis of non-coding Pol II transcripts, such as enhancer RNAs (eRNAs), small nuclear RNAs (snRNAs), telomerase RNAs and long non-coding RNAs (lncRNAs). Within the integrator complex, INTS6 acts as a molecular adapter that promotes assembly of protein phosphatase 2A (PP2A) subunits to the integrator core complex, promoting recruitment of PP2A to transcription pause-release checkpoint. This is Integrator complex subunit 6-B (ints6-b) from Xenopus laevis (African clawed frog).